We begin with the raw amino-acid sequence, 378 residues long: Protein RecA (378 aa).

79–86 (GPESSGKT) provides a ligand contact to ATP.

The protein belongs to the RecA family.

The protein localises to the cytoplasm. Functionally, can catalyze the hydrolysis of ATP in the presence of single-stranded DNA, the ATP-dependent uptake of single-stranded DNA by duplex DNA, and the ATP-dependent hybridization of homologous single-stranded DNAs. It interacts with LexA causing its activation and leading to its autocatalytic cleavage. This Streptococcus equi subsp. zooepidemicus (strain MGCS10565) protein is Protein RecA.